We begin with the raw amino-acid sequence, 392 residues long: V-type proton ATPase subunit C (392 aa).

The residue at position 2 (Ala-2) is an N-acetylalanine.

The protein belongs to the V-ATPase C subunit family. V-ATPase is a heteromultimeric enzyme composed of a peripheral catalytic V1 complex (components A to H) attached to an integral membrane V0 proton pore complex (components: a, c, c', c'', d, e, f and VOA1). Interacts directly with VMA4.

It is found in the vacuole membrane. In terms of biological role, subunit of the V1 complex of vacuolar(H+)-ATPase (V-ATPase), a multisubunit enzyme composed of a peripheral complex (V1) that hydrolyzes ATP and a membrane integral complex (V0) that translocates protons. V-ATPase is responsible for acidifying and maintaining the pH of intracellular compartments. Subunit C is necessary for the assembly of the catalytic sector of the enzyme and is likely to have a specific function in its catalytic activity. Reversibly leaves the enzyme after glucose depletion, causing the catalytic subcomplex V1 to detach from the V0 section. In Saccharomyces cerevisiae (strain ATCC 204508 / S288c) (Baker's yeast), this protein is V-type proton ATPase subunit C.